Reading from the N-terminus, the 308-residue chain is Dual oxidase maturation factor 1 (308 aa).

At 1 to 21 (MQANIFPFYPQPRTSFKFDTK) the chain is on the extracellular side. Residues 22-42 (IIEIIIICIVTACTFIIILPG) form a helical membrane-spanning segment. Residues 43–49 (IRGKSRS) lie on the Cytoplasmic side of the membrane. Residues 50–70 (IWLFRILTSLFIGAVILAVNF) form a helical membrane-spanning segment. Over 71 to 172 (TSDWETGIVT…SPCGLFQQYC (102 aa)) the chain is Extracellular. N94, N107, and N119 each carry an N-linked (GlcNAc...) asparagine glycan. A helical membrane pass occupies residues 173-195 (ISTYYSSEIMWVAFGSWILYNVL). Topologically, residues 196–199 (FSMP) are cytoplasmic. The chain crosses the membrane as a helical span at residues 200-220 (VILYGICMMFVTAICMLVSLI). Over 221–247 (SFASVRQAPVCNIHFGNAVLKTHFGVS) the chain is Extracellular. A helical membrane pass occupies residues 248-268 (YWLSLVTGLFCLIVSLVLLFL). The Cytoplasmic portion of the chain corresponds to 269–308 (YKTQPKVIRLIFSYGEEEDLSDKSENEEEHSSALSLNEML).

Belongs to the DUOXA family.

The protein resides in the membrane. Its function is as follows. Possible role in maturation and transport from the endoplasmic reticulum to the plasma membrane of functional dual oxidase. The sequence is that of Dual oxidase maturation factor 1 (duoxa1) from Xenopus tropicalis (Western clawed frog).